A 479-amino-acid chain; its full sequence is Envelope glycoprotein C homolog (479 aa).

The signal sequence occupies residues 1 to 22; that stretch reads MASLARAMLALLALYAAAIAAA. Topologically, residues 23–451 are virion surface; the sequence is PSTTTALDTT…SVSWPVVSSM (429 aa). Residues 26-96 form a disordered region; the sequence is TTALDTTPNG…RVHGDKATAH (71 aa). The N-linked (GlcNAc...) asparagine; by host glycan is linked to asparagine 40. The span at 48-57 shows a compositional bias: pro residues; it reads PSPPPTPAPA. The segment at 75–82 is HDB1; it reads SRRKPPRN. The span at 75 to 87 shows a compositional bias: basic residues; that stretch reads SRRKPPRNNNRTR. An N-linked (GlcNAc...) asparagine; by host glycan is attached at asparagine 84. The tract at residues 95-101 is HDB2; that stretch reads AHGRKRI. Cysteine 103 and cysteine 120 are joined by a disulfide. Positions 135–140 are HDB3; sequence YRRGRF. Residues asparagine 169, asparagine 192, asparagine 220, asparagine 228, asparagine 285, and asparagine 302 are each glycosylated (N-linked (GlcNAc...) asparagine; by host). 3 disulfides stabilise this stretch: cysteine 256/cysteine 326, cysteine 365/cysteine 418, and cysteine 369/cysteine 392. A helical membrane pass occupies residues 452–472; it reads IVVIAGIGILAIVLVIMATCV. Residues 473–479 are Cytoplasmic-facing; sequence YYRQAGP.

Belongs to the herpesviridae glycoprotein C family. Interacts with host complement component C3; this interaction inhibits host immune response by disregulating complement cascade.

Its subcellular location is the virion membrane. Its function is as follows. Essential for the initial attachment to heparan sulfate moieties of the host cell surface proteoglycans. Plays also a role in host immune evasion by inhibiting the host complement cascade activation. In Suid herpesvirus 1 (strain Indiana-Funkhauser / Becker) (SuHV-1), this protein is Envelope glycoprotein C homolog (gC).